A 43-amino-acid polypeptide reads, in one-letter code: Gene 75 protein (43 aa).

This chain is Gene 75 protein (75), found in Mycobacterium (Mycobacteriophage L5).